A 277-amino-acid polypeptide reads, in one-letter code: Large ribosomal subunit protein uL2 (277 aa).

Residues Gly-222 to Lys-277 are disordered.

It belongs to the universal ribosomal protein uL2 family. In terms of assembly, part of the 50S ribosomal subunit. Forms a bridge to the 30S subunit in the 70S ribosome.

Its function is as follows. One of the primary rRNA binding proteins. Required for association of the 30S and 50S subunits to form the 70S ribosome, for tRNA binding and peptide bond formation. It has been suggested to have peptidyltransferase activity; this is somewhat controversial. Makes several contacts with the 16S rRNA in the 70S ribosome. This chain is Large ribosomal subunit protein uL2, found in Bartonella tribocorum (strain CIP 105476 / IBS 506).